Consider the following 326-residue polypeptide: Small ribosomal subunit protein RACK1x (326 aa).

7 WD repeats span residues 13-53 (AHTD…KSYG), 61-100 (GHSH…TTRR), 103-142 (GHTK…KYTI), 147-188 (GHKE…LRNS), 191-230 (GHSG…KLYS), 232-270 (EAGS…VVED), and 290-326 (NQKK…IGRY).

Belongs to the WD repeat G protein beta family. Ribosomal protein RACK1 subfamily. As to quaternary structure, homodimer and heterodimer with RACK1A or RACK1B. Interacts with GB1, MEKK1, MKK4, MKK5, MPK3 and MPK6, but not with GPA1 or MPK4. In terms of tissue distribution, widely expressed.

Its function is as follows. Minor component of the RACK1 regulatory proteins that play a role in multiple signal transduction pathways. Involved in multiple hormone responses and developmental processes. MAPK cascade scaffolding protein involved in the protease IV and ArgC signaling pathway but not the flg22 pathway. The polypeptide is Small ribosomal subunit protein RACK1x (Arabidopsis thaliana (Mouse-ear cress)).